The chain runs to 616 residues: General alpha-glucoside permease (616 aa).

The Cytoplasmic portion of the chain corresponds to 1 to 115 (MKNIISLVSK…AALWSILVST (115 aa)). Residues 15 to 27 (SKNEDKNISESSR) show a composition bias toward basic and acidic residues. The tract at residues 15–40 (SKNEDKNISESSRDIVNQQEVFNTED) is disordered. Residues 116 to 136 (TLVMEGYDTALLSALYALPVF) form a helical membrane-spanning segment. Over 137–160 (QRKFGTLNGEGSYEITSQWQIGLN) the chain is Extracellular. A helical transmembrane segment spans residues 161–181 (MCVLCGEMIGLQITTYMVEFM). Residues 182-191 (GNRYTMITAL) are Cytoplasmic-facing. A helical transmembrane segment spans residues 192–212 (GLLTAYIFILYYCKSLAMIAV). The Extracellular portion of the chain corresponds to 213–214 (GQ). The helical transmembrane segment at 215–235 (ILSAIPWGCFQSLAVTYASEV) threads the bilayer. Residues 236 to 242 (CPLALRY) are Cytoplasmic-facing. The helical transmembrane segment at 243-263 (YMTSYSNICWLFGQIFASGIM) threads the bilayer. Residues 264–278 (KNSQENLGNSDLGYK) lie on the Extracellular side of the membrane. The helical transmembrane segment at 279 to 299 (LPFALQWIWPAPLMIGIFFAP) threads the bilayer. Residues 300-373 (ESPWWLVRKD…VNGRRTRLAC (74 aa)) are Cytoplasmic-facing. The chain crosses the membrane as a helical span at residues 374–394 (LTWVAQNSSGAVLLGYSTYFF). Topologically, residues 395–404 (ERAGMATDKA) are extracellular. The chain crosses the membrane as a helical span at residues 405–425 (FTFSLIQYCLGLAGTLCSWVI). Topologically, residues 426–433 (SGRVGRWT) are cytoplasmic. A helical membrane pass occupies residues 434 to 454 (ILTYGLAFQMVCLFIIGGMGF). Residues 455–466 (GSGSSASNGAGG) lie on the Extracellular side of the membrane. A helical membrane pass occupies residues 467 to 487 (LLLALSFFYNAGIGAVVYCIV). Residues 488-504 (AEIPSAELRTKTIVLAR) lie on the Cytoplasmic side of the membrane. Residues 505–525 (ICYNLMAVINAILTPYMLNVS) traverse the membrane as a helical segment. The Extracellular portion of the chain corresponds to 526 to 532 (DWNWGAK). A helical transmembrane segment spans residues 533 to 553 (TGLYWGGFTAVTLAWVIIDLP). Residues 554–616 (ETTGRTFSEI…QRELNAADKC (63 aa)) are Cytoplasmic-facing. Residues 587 to 616 (GKTQHDSLADESISQSSSIKQRELNAADKC) form a disordered region. Basic and acidic residues predominate over residues 606–616 (KQRELNAADKC).

This sequence belongs to the major facilitator superfamily. Sugar transporter (TC 2.A.1.1) family.

Its subcellular location is the cell membrane. Functionally, high-affinity uptake of alpha-glucosides such as maltose, turanose, isomaltose, alpha-methylglucoside, maltotriose, palatinose, trehalose, melezitose and glucose. Acts with the concomitant transport of protons into the cell (symport system). Provides an alternative and minor mechanism for growth on trehalose carbon source by transporting trehalose into the cytoplasm for conversion to glucose by neutral trehalase NTH1. This chain is General alpha-glucoside permease, found in Saccharomyces cerevisiae (strain CEN.PK113-7D) (Baker's yeast).